Consider the following 509-residue polypeptide: Monofunctional riboflavin biosynthesis protein RIBA 3, chloroplastic (509 aa).

The N-terminal 43 residues, 1-43, are a transit peptide targeting the chloroplast; the sequence is MMDSALYHPRIFFAHSFINGLYSSPRFANTCWRLVSRSSWEIK. The segment at 44–302 is inactive DHBP synthase; it reads ASENSDRNVF…LTDLIRYRRK (259 aa). D-ribulose 5-phosphate is bound by residues 125–126 and 240–244; these read GD and RAGHT. A GTP cyclohydrolase II region spans residues 303 to 509; that stretch reads RDKLVERITV…ISDNNDQPLA (207 aa). Position 353–357 (353–357) interacts with GTP; it reads RVHSE. 3 residues coordinate Zn(2+): Cys358, Cys369, and Cys371. GTP is bound by residues Gln374, 397–399, and Thr419; that span reads EGR. Asp431 serves as the catalytic Proton acceptor; for GTP cyclohydrolase activity. Arg433 functions as the Nucleophile; for GTP cyclohydrolase activity in the catalytic mechanism. Residues Thr454 and Lys459 each coordinate GTP.

In the N-terminal section; belongs to the DHBP synthase family. The protein in the C-terminal section; belongs to the GTP cyclohydrolase II family. Requires Zn(2+) as cofactor. Expressed in leaves, shoots, roots, flowers and siliques.

The protein resides in the plastid. It is found in the chloroplast. The enzyme catalyses GTP + 4 H2O = 2,5-diamino-6-hydroxy-4-(5-phosphoribosylamino)-pyrimidine + formate + 2 phosphate + 3 H(+). Its pathway is cofactor biosynthesis; riboflavin biosynthesis; 5-amino-6-(D-ribitylamino)uracil from GTP: step 1/4. Involved in riboflavin biosynthesis. Catalyzes the conversion of GTP to 2,5-diamino-6-ribosylamino-4(3H)-pyrimidinone 5'-phosphate (DARP), formate and pyrophosphate. RIBA2 and RIBA3 together are not able to complement the loss of function of RIBA1. The sequence is that of Monofunctional riboflavin biosynthesis protein RIBA 3, chloroplastic (RIBA3) from Arabidopsis thaliana (Mouse-ear cress).